The primary structure comprises 236 residues: Ribose-5-phosphate isomerase A (236 aa).

Substrate-binding positions include 33 to 36 (TGST), 90 to 93 (DGAD), and 103 to 106 (KGGG). The active-site Proton acceptor is the glutamate 112. Lysine 130 serves as a coordination point for substrate.

The protein belongs to the ribose 5-phosphate isomerase family. As to quaternary structure, homodimer.

The enzyme catalyses aldehydo-D-ribose 5-phosphate = D-ribulose 5-phosphate. It functions in the pathway carbohydrate degradation; pentose phosphate pathway; D-ribose 5-phosphate from D-ribulose 5-phosphate (non-oxidative stage): step 1/1. In terms of biological role, catalyzes the reversible conversion of ribose-5-phosphate to ribulose 5-phosphate. This chain is Ribose-5-phosphate isomerase A, found in Trichormus variabilis (strain ATCC 29413 / PCC 7937) (Anabaena variabilis).